The following is a 620-amino-acid chain: Siderophore iron transporter ARN2 (620 aa).

Residues 1–42 form a disordered region; that stretch reads MIEVPEDNRSSQTKRKNTEKNCNELMVDEKMDDDSSPRDEMK. A compositionally biased stretch (basic and acidic residues) spans 16–42; it reads KNTEKNCNELMVDEKMDDDSSPRDEMK. The next 14 helical transmembrane spans lie at 71-93, 106-128, 135-152, 162-184, 191-213, 223-245, 286-308, 318-335, 355-377, 392-414, 421-438, 448-470, 491-513, and 561-578; these read IFLFSAFICTFAYGLDSSIRGTY, LISTVSVIVLMISAVSQVIFGGL, LTLFLVSIVLYIVGTIIQ, AAGAVFYYVGLVGVMLQVVLMLS, WRLFYTLIPSWPSIITTWVSGSV, WSWNIAMWAFIFPLCCIPLILCM, VVGVLLFTAGVGCILVPLTLAGG, IIGPFVLGFVLVPGFIYW, VWAPLGIMFFICFVYQMAAGYLY, TRIINLYSFVTAVVAPFLGLIVT, SYIIFGGSLYFITMGLFY, GGIIAGMVIWGLSSCLFDYPTIV, VFRIGGAVAAAISGAIWTQSLYP, and VIVALVFSAPMFLLTFCV.

This sequence belongs to the major facilitator superfamily.

The protein localises to the endosome membrane. Functionally, involved in the transport of siderophore triacestylfusarinine C and so has a role in iron homeostasis. The chain is Siderophore iron transporter ARN2 (ARN2) from Saccharomyces cerevisiae (strain ATCC 204508 / S288c) (Baker's yeast).